We begin with the raw amino-acid sequence, 144 residues long: 3-hydroxyacyl-[acyl-carrier-protein] dehydratase FabZ (144 aa).

His-51 is a catalytic residue.

The protein belongs to the thioester dehydratase family. FabZ subfamily.

It localises to the cytoplasm. It carries out the reaction a (3R)-hydroxyacyl-[ACP] = a (2E)-enoyl-[ACP] + H2O. Involved in unsaturated fatty acids biosynthesis. Catalyzes the dehydration of short chain beta-hydroxyacyl-ACPs and long chain saturated and unsaturated beta-hydroxyacyl-ACPs. This chain is 3-hydroxyacyl-[acyl-carrier-protein] dehydratase FabZ, found in Clostridium botulinum (strain 657 / Type Ba4).